The chain runs to 89 residues: Small ribosomal subunit protein uS14 (89 aa).

It belongs to the universal ribosomal protein uS14 family. In terms of assembly, part of the 30S ribosomal subunit. Contacts proteins S3 and S10.

Binds 16S rRNA, required for the assembly of 30S particles and may also be responsible for determining the conformation of the 16S rRNA at the A site. The polypeptide is Small ribosomal subunit protein uS14 (Chlorobium phaeovibrioides (strain DSM 265 / 1930) (Prosthecochloris vibrioformis (strain DSM 265))).